A 191-amino-acid chain; its full sequence is Protein Ves (191 aa).

The protein belongs to the Ves family.

The sequence is that of Protein Ves from Shigella boydii serotype 18 (strain CDC 3083-94 / BS512).